Here is a 370-residue protein sequence, read N- to C-terminus: D-alanine--D-alanine ligase (370 aa).

One can recognise an ATP-grasp domain in the interval 142–348 (KQILTHHHIQ…YTALIDQLIQ (207 aa)). 172–227 (QAHVGDHLFIKPANQGSSIGIHKAENEQEYLDGLADAFKYDYKILVEESIDNPREV) is a binding site for ATP. Mg(2+)-binding residues include Asp-302, Glu-315, and Asn-317.

This sequence belongs to the D-alanine--D-alanine ligase family. Mg(2+) is required as a cofactor. The cofactor is Mn(2+).

It localises to the cytoplasm. The catalysed reaction is 2 D-alanine + ATP = D-alanyl-D-alanine + ADP + phosphate + H(+). Its pathway is cell wall biogenesis; peptidoglycan biosynthesis. Functionally, cell wall formation. This is D-alanine--D-alanine ligase from Lactiplantibacillus plantarum (strain ATCC BAA-793 / NCIMB 8826 / WCFS1) (Lactobacillus plantarum).